The sequence spans 526 residues: Phosphoenolpyruvate carboxylase (526 aa).

The protein belongs to the PEPCase type 2 family. Homotetramer. Requires Mg(2+) as cofactor.

It catalyses the reaction oxaloacetate + phosphate = phosphoenolpyruvate + hydrogencarbonate. Catalyzes the irreversible beta-carboxylation of phosphoenolpyruvate (PEP) to form oxaloacetate (OAA), a four-carbon dicarboxylic acid source for the tricarboxylic acid cycle. The polypeptide is Phosphoenolpyruvate carboxylase (Methanosarcina mazei (strain ATCC BAA-159 / DSM 3647 / Goe1 / Go1 / JCM 11833 / OCM 88) (Methanosarcina frisia)).